Here is a 69-residue protein sequence, read N- to C-terminus: Pleurain-A2 (69 aa).

The signal sequence occupies residues 1-22 (MFTLKKTLLLLYFLGTISISLC). A propeptide spanning residues 23–43 (KQERDADEDDGRKMTEEEVKR) is cleaved from the precursor. A disulfide bond links Cys-63 and Cys-69.

Expressed by the skin glands.

The protein resides in the secreted. Functionally, antimicrobial peptide. Has activity against the Gram-positive bacterium S.aureus ATCC2592 (MIC=15 ug/ml), the Gram-negative bacteria E.coli ATCC25922 (MIC=60 ug/ml), B.dysenteriae (MIC=60 ug/ml), H.pylori NTCT11637 (MIC=30 ug/ml), and the fungus C.albicans ATCC2002 (MIC=30 ug/ml). Has little hemolytic activity on rabbit red blood cells. The chain is Pleurain-A2 from Nidirana pleuraden (Yunnan pond frog).